The following is a 59-amino-acid chain: Protein translocase subunit SecE (59 aa).

The chain crosses the membrane as a helical span at residues 39 to 59; the sequence is VMALFLGLIDALFVALLSFFF.

This sequence belongs to the SecE/SEC61-gamma family. Component of the Sec protein translocase complex. Heterotrimer consisting of SecY, SecE and SecG subunits. The heterotrimers can form oligomers, although 1 heterotrimer is thought to be able to translocate proteins. Interacts with the ribosome. Interacts with SecDF, and other proteins may be involved. Interacts with SecA.

The protein localises to the cell inner membrane. Its function is as follows. Essential subunit of the Sec protein translocation channel SecYEG. Clamps together the 2 halves of SecY. May contact the channel plug during translocation. This chain is Protein translocase subunit SecE, found in Treponema pallidum (strain Nichols).